The primary structure comprises 104 residues: Naphthalene 1,2-dioxygenase system, ferredoxin component (104 aa).

The Rieske domain occupies 6–101 (IDAVALYEIP…VKIEGQRVMI (96 aa)). The [2Fe-2S] cluster site is built by cysteine 45, histidine 47, cysteine 64, and histidine 67.

It belongs to the bacterial ring-hydroxylating dioxygenase ferredoxin component family. As to quaternary structure, the naphthalene dioxygenase (NDO) multicomponent enzyme system is composed of an electron transfer component and a dioxygenase component (iron sulfur protein (ISP)). The electron transfer component is composed of a ferredoxin reductase (NdoR) and a ferredoxin (NdoA), and the dioxygenase component is formed of a heterohexamer (trimer of heterodimers) of three large alpha subunits (NdoB) and three small beta subunits (NdoC). The cofactor is [2Fe-2S] cluster.

Its pathway is aromatic compound metabolism; naphthalene degradation. In terms of biological role, component of the naphthalene dioxygenase (NDO) multicomponent enzyme system which catalyzes the incorporation of both atoms of molecular oxygen into naphthalene to form cis-(1R,2S)-dihydroxy-1,2-dihydronaphthalene. Functions as an intermediate electron transfer protein via a specific interaction with iron sulfur protein components (ISP) (NdoB and NdoC). The sequence is that of Naphthalene 1,2-dioxygenase system, ferredoxin component from Pseudomonas aeruginosa.